A 276-amino-acid chain; its full sequence is 1H-3-hydroxy-4-oxoquinaldine 2,4-dioxygenase (276 aa).

The region spanning 28 to 150 (PAILLLPGWC…TLLKDPERWR (123 aa)) is the AB hydrolase-1 domain. Residues 36-38 (WCH), 100-101 (HS), and Trp-160 each bind substrate. His-251 acts as the Proton donor/acceptor in catalysis.

Belongs to the AB hydrolase superfamily. The cofactor is None. Contrary to most other dioxygenases, this enzyme does not require a cofactor for catalysis..

It catalyses the reaction 3-hydroxy-2-methyl-1H-quinolin-4-one + O2 = N-acetylanthranilate + CO + H(+). Its function is as follows. Ring-cleaving dioxygenase involved in quinaldine degradation and utilization. This chain is 1H-3-hydroxy-4-oxoquinaldine 2,4-dioxygenase (hod), found in Paenarthrobacter nitroguajacolicus (Arthrobacter nitroguajacolicus).